An 879-amino-acid polypeptide reads, in one-letter code: Alanine--tRNA ligase (879 aa).

Zn(2+)-binding residues include H567, H571, C669, and H673.

This sequence belongs to the class-II aminoacyl-tRNA synthetase family. Zn(2+) serves as cofactor.

The protein resides in the cytoplasm. The enzyme catalyses tRNA(Ala) + L-alanine + ATP = L-alanyl-tRNA(Ala) + AMP + diphosphate. Functionally, catalyzes the attachment of alanine to tRNA(Ala) in a two-step reaction: alanine is first activated by ATP to form Ala-AMP and then transferred to the acceptor end of tRNA(Ala). Also edits incorrectly charged Ser-tRNA(Ala) and Gly-tRNA(Ala) via its editing domain. The chain is Alanine--tRNA ligase from Levilactobacillus brevis (strain ATCC 367 / BCRC 12310 / CIP 105137 / JCM 1170 / LMG 11437 / NCIMB 947 / NCTC 947) (Lactobacillus brevis).